We begin with the raw amino-acid sequence, 263 residues long: Complement C1q tumor necrosis factor-related protein 6 (263 aa).

The N-terminal stretch at 1–24 (MRVIMGTASLGSIWAVFLLPLVFG) is a signal peptide. Asn76 is a glycosylation site (N-linked (GlcNAc...) asparagine). The disordered stretch occupies residues 80–123 (LKGDKGDRGPSGTPGKPGKNGTRGDRGSQGIKGDKGQAGSPGSS). One can recognise a Collagen-like domain in the interval 82-123 (GDKGDRGPSGTPGKPGKNGTRGDRGSQGIKGDKGQAGSPGSS). Positions 124–263 (CQTHYSAFSV…SGHLIKAEDN (140 aa)) constitute a C1q domain.

It localises to the secreted. The polypeptide is Complement C1q tumor necrosis factor-related protein 6 (C1qtnf6) (Rattus norvegicus (Rat)).